The chain runs to 351 residues: D-threonate 4-phosphate dehydrogenase (351 aa).

2 residues coordinate substrate: His-147 and Thr-148. Positions 177, 221, and 276 each coordinate a divalent metal cation. Residues Lys-284, Asn-293, and Arg-302 each contribute to the substrate site.

It belongs to the PdxA family. PdxA2 subfamily. Homodimer. It depends on a divalent metal cation as a cofactor.

It carries out the reaction 4-O-phospho-D-threonate + NAD(+) = dihydroxyacetone phosphate + CO2 + NADH. In terms of biological role, catalyzes the NAD-dependent oxidation and subsequent decarboxylation of D-threonate 4-phosphate to produce dihydroxyacetone phosphate (DHAP). Can also use 4-hydroxy-L-threonine 4-phosphate as substrate. The polypeptide is D-threonate 4-phosphate dehydrogenase (Bordetella bronchiseptica (strain ATCC BAA-588 / NCTC 13252 / RB50) (Alcaligenes bronchisepticus)).